Here is a 444-residue protein sequence, read N- to C-terminus: N-succinylarginine dihydrolase (444 aa).

Substrate-binding positions include 19–28 (AGLSFGNVAS), N110, and 137–138 (HR). The active site involves E174. R214 provides a ligand contact to substrate. Residue H250 is part of the active site. Substrate-binding residues include D252 and N362. C368 acts as the Nucleophile in catalysis.

This sequence belongs to the succinylarginine dihydrolase family. Homodimer.

The enzyme catalyses N(2)-succinyl-L-arginine + 2 H2O + 2 H(+) = N(2)-succinyl-L-ornithine + 2 NH4(+) + CO2. Its pathway is amino-acid degradation; L-arginine degradation via AST pathway; L-glutamate and succinate from L-arginine: step 2/5. In terms of biological role, catalyzes the hydrolysis of N(2)-succinylarginine into N(2)-succinylornithine, ammonia and CO(2). The polypeptide is N-succinylarginine dihydrolase (Shewanella baltica (strain OS155 / ATCC BAA-1091)).